We begin with the raw amino-acid sequence, 628 residues long: E3 SUMO-protein ligase PIAS3 (628 aa).

The tract at residues 1 to 200 (MAELGELKHM…QLRFCLCETS (200 aa)) is interaction with CCAR2. One can recognise an SAP domain in the interval 11-45 (VMSFRVSELQVLLGFAGRNKSGRKHELLAKALHLL). Positions 19-23 (LQVLL) match the LXXLL motif motif. Glycyl lysine isopeptide (Lys-Gly) (interchain with G-Cter in SUMO2) cross-links involve residues lysine 46, lysine 56, lysine 230, and lysine 307. Residues 115-280 (MHPPLPQPVH…SLSVYLVRQL (166 aa)) form the PINIT domain. The SP-RING-type zinc-finger motif lies at 312 to 393 (PDSEVATTSL…FMEILNSCSD (82 aa)). Residues cysteine 343, histidine 345, cysteine 366, and cysteine 369 each coordinate Zn(2+). Residues 450–460 (LTIESSSDEED) are SUMO1-binding. Glycyl lysine isopeptide (Lys-Gly) (interchain with G-Cter in SUMO2) cross-links involve residues lysine 466 and lysine 482. The disordered stretch occupies residues 571–628 (GPLAPTLGSSHRSSTPAPPPGRVSSIVAPGSSLREGHGGPLPSGPSLTGCRSDVISLD).

Belongs to the PIAS family. As to quaternary structure, monomer. Interacts with PLAG1 and ZFHX3. Interacts with STAT5A; the interaction occurs on stimulation by PRL. Binds SUMO1 and UBE2I. Interacts with AR, BCL11A, HMGA2, IRF1 and NCOA2. Interacts with MITF; the interaction inhibits the transcriptional activity of MITF. Interacts with STAT3; the interaction occurs on stimulation by IL6, CNTF or OSM and inhibits the DNA binding activity of STAT3. Interacts with GFI1; the interaction relieves the inhibitory effect of PIAS3 on STAT3-mediated transcriptional activity. Interacts with MTA1. Interacts with CCAR2 (via N-terminus). Interacts with TRIM8. Interacts with PRDM1. Sumoylated. As to expression, expressed in kidney, heart, spleen, brain and cerebellum; weak expression, if any, in liver and lung.

The protein resides in the cytoplasm. It localises to the nucleus. The protein localises to the nucleus speckle. The protein operates within protein modification; protein sumoylation. In terms of biological role, functions as an E3-type small ubiquitin-like modifier (SUMO) ligase, stabilizing the interaction between UBE2I and the substrate, and as a SUMO-tethering factor. Plays a crucial role as a transcriptional coregulation in various cellular pathways, including the STAT pathway and the steroid hormone signaling pathway. Repressor of STAT3 signaling via inhibiting STAT3 DNA-binding and suppressing cell growth. Repressor of MITF transcriptional activity. Enhances the sumoylation of MTA1 and may participate in its paralog-selective sumoylation. Sumoylates CCAR2 which promotes its interaction with SIRT1. Diminishes the sumoylation of ZFHX3 by preventing the colocalization of ZFHX3 with SUMO1 in the nucleus. In Mus musculus (Mouse), this protein is E3 SUMO-protein ligase PIAS3 (Pias3).